The sequence spans 237 residues: Oligoribonuclease, mitochondrial (237 aa).

The N-terminal 25 residues, 1-25 (MLGGSLGSRLLRGVGGSHGRFGARG), are a transit peptide targeting the mitochondrion. Residues 43–207 (MVWVDLEMTG…DDISESIKEL (165 aa)) enclose the Exonuclease domain. 2 residues coordinate Mg(2+): Asp47 and Glu49. Ser92 is modified (phosphoserine). A Phosphotyrosine modification is found at Tyr122. Mg(2+) is bound at residue Asp147. At Lys173 the chain carries N6-acetyllysine. His194 is an active-site residue. Residue Asp199 coordinates Mg(2+).

It belongs to the oligoribonuclease family. In terms of assembly, homodimer. Homotetramer. Mn(2+) serves as cofactor. Requires Mg(2+) as cofactor. As to expression, highly expressed in the heart and at lower levels in the lymph nodes, brain, lung, liver, spleen and thymus.

It is found in the mitochondrion intermembrane space. The protein localises to the mitochondrion matrix. Its subcellular location is the mitochondrion. It localises to the cytoplasm. The protein resides in the nucleus. Its activity is regulated as follows. Inhibited by adenosine 3',5'-bisphosphate. Functionally, 3'-to-5'exoribonuclease that preferentially degrades DNA and RNA oligonucleotides composed of only two nucleotides. Binds and degrades longer oligonucleotides with a lower affinity. Plays dual roles in mitochondria, scavenging nanoRNAs (small RNA oligonucleotides of &lt;5 nucleotides) that are produced by the degradosome and clearing short RNAs that are generated by RNA processing. Essential for correct initiation of mitochondrial transcription, degrading mitochondrial RNA dinucleotides to prevent RNA-primed transcription at non-canonical sites in the mitochondrial genome. Essential for embryonic development. Its function is as follows. 3'-to-5'exoribonuclease that preferentially degrades DNA and RNA oligonucleotides composed of only two nucleotides. The sequence is that of Oligoribonuclease, mitochondrial (REXO2) from Homo sapiens (Human).